Consider the following 332-residue polypeptide: Ribosomal RNA-processing protein 8 (332 aa).

The segment at 1-109 (MGKKRINEVS…EVEKKNEEGD (109 aa)) is disordered. Basic residues-rich tracts occupy residues 38-53 (KKKK…KLAA) and 82-94 (KKKK…KKKY). The segment covering 95–109 (KPEAAEVEKKNEEGD) has biased composition (basic and acidic residues). Residues H158, G193, D213, D225, M226, and C242 each contribute to the S-adenosyl-L-methionine site.

This sequence belongs to the methyltransferase superfamily. RRP8 family.

It localises to the nucleus. It is found in the nucleolus. Its function is as follows. Probable methyltransferase required to silence rDNA. In Caenorhabditis briggsae, this protein is Ribosomal RNA-processing protein 8 (rrp-8).